A 105-amino-acid chain; its full sequence is MLPDQALPIYNLLEKLLKETHKSINDCYKNENLYKHQLAKIYCQQAQICTPNGSTKLSKNSIGLYENAANLGSEEANIKLGKIEFKSGNYVKALEYFKNLCKRSF.

This is an uncharacterized protein from Rickettsia conorii (strain ATCC VR-613 / Malish 7).